The following is a 239-amino-acid chain: Ribosomal RNA small subunit methyltransferase G (239 aa).

S-adenosyl-L-methionine contacts are provided by residues glycine 77, phenylalanine 82, 128–129 (AE), and arginine 147. The interval 216–239 (KKQSQTPKKFPRKPGTPNKSPIEG) is disordered.

The protein belongs to the methyltransferase superfamily. RNA methyltransferase RsmG family.

It is found in the cytoplasm. In terms of biological role, specifically methylates the N7 position of guanine in position 535 of 16S rRNA. The chain is Ribosomal RNA small subunit methyltransferase G from Bacillus licheniformis (strain ATCC 14580 / DSM 13 / JCM 2505 / CCUG 7422 / NBRC 12200 / NCIMB 9375 / NCTC 10341 / NRRL NRS-1264 / Gibson 46).